We begin with the raw amino-acid sequence, 487 residues long: NADH-quinone oxidoreductase subunit N (487 aa).

Transmembrane regions (helical) follow at residues 9 to 29 (PVLP…LGVF), 38 to 58 (VSVL…SLGG), 73 to 93 (FAGF…AMSL), 108 to 128 (VLVL…DFIA), 161 to 181 (FVLG…LYGF), 208 to 228 (IIAG…AVPF), 240 to 260 (PTPV…CLLV), 277 to 297 (VVTF…VVQT), 306 to 326 (SSIG…TLGI), 328 to 348 (GVLI…AVIL), 374 to 394 (AFVM…AGFW), 408 to 430 (LYTL…LRIV), and 452 to 472 (LVMA…APLV).

Belongs to the complex I subunit 2 family. As to quaternary structure, NDH-1 is composed of 14 different subunits. Subunits NuoA, H, J, K, L, M, N constitute the membrane sector of the complex.

It is found in the cell inner membrane. It catalyses the reaction a quinone + NADH + 5 H(+)(in) = a quinol + NAD(+) + 4 H(+)(out). Its function is as follows. NDH-1 shuttles electrons from NADH, via FMN and iron-sulfur (Fe-S) centers, to quinones in the respiratory chain. The immediate electron acceptor for the enzyme in this species is believed to be ubiquinone. Couples the redox reaction to proton translocation (for every two electrons transferred, four hydrogen ions are translocated across the cytoplasmic membrane), and thus conserves the redox energy in a proton gradient. This is NADH-quinone oxidoreductase subunit N from Paramagnetospirillum magneticum (strain ATCC 700264 / AMB-1) (Magnetospirillum magneticum).